We begin with the raw amino-acid sequence, 217 residues long: Tegument protein BKRF4 (217 aa).

Positions 1–217 (MAMFLKSRGV…GNNNYNWPWL (217 aa)) are disordered. A compositionally biased stretch (polar residues) spans 32–42 (YTLGSQASQSI). Over residues 43–79 (QEEDVSDTDESDYSDEDEEIDLEEEYPSDEDPSEGSD) the composition is skewed to acidic residues. The tract at residues 63–64 (DL) is interaction with host histones H3/H4. The segment at 81 to 84 (DPSW) is interaction with host H2A/H2B. Acidic residues predominate over residues 89–102 (SDESDYSESDEDEA). Residues 106–132 (SQASRSSRVSPSTQQSSGLTPTPSFSR) are compositionally biased toward low complexity. Positions 136–145 (RAPPRPPAPA) are enriched in pro residues. A compositionally biased stretch (polar residues) spans 208-217 (GNNNYNWPWL).

This sequence belongs to the lymphocryptovirus BKRF4 family. As to quaternary structure, forms a complex with the host H3/H4 dimer and histone chaperone ASF1. Also forms a complex with host H2A/H2B dimer. Interacts (via C-terminus) with BGLF2; this interaction is important for infectious virion production.

The protein resides in the virion tegument. Its subcellular location is the host nucleus. It is found in the host cytoplasm. The protein localises to the host perinuclear region. In terms of biological role, histone-binding protein that binds to histones H2A/H2B, H3/H4 and cellular chromatin to overcome the host DNA damage response triggered by the viral genome ends. Interferes with histone ubiquitination and recruitment of repair proteins. The polypeptide is Tegument protein BKRF4 (Epstein-Barr virus (strain GD1) (HHV-4)).